A 151-amino-acid chain; its full sequence is MGTDDVAKSEKIREGFQINWLILRDADTGKILWQENKDFSCPDVEHEARVPIKILDLRAVSREINFSTVEAMENFRLDQKVLFKGRIMEEWFFEMGWVSPNTTNTWQSTIEAAPESQMMPAKVLNGNVTIETSFFDGETLISKSVVRLYYI.

This sequence belongs to the PDE6D/unc-119 family. In terms of assembly, interacts with Pde6.

The protein localises to the nucleus. Its subcellular location is the cytoplasm. The protein is Probable cGMP 3',5'-cyclic phosphodiesterase subunit delta of Culex quinquefasciatus (Southern house mosquito).